The sequence spans 335 residues: DNA-directed RNA polymerase subunit alpha (335 aa).

The tract at residues 1 to 233 is alpha N-terminal domain (alpha-NTD); the sequence is MIRDKISVSI…DLFIPFLHGE (233 aa). Positions 264 to 335 are alpha C-terminal domain (alpha-CTD); it reads KEKIAFKHIF…KRFAIDPPRN (72 aa).

This sequence belongs to the RNA polymerase alpha chain family. As to quaternary structure, in plastids the minimal PEP RNA polymerase catalytic core is composed of four subunits: alpha, beta, beta', and beta''. When a (nuclear-encoded) sigma factor is associated with the core the holoenzyme is formed, which can initiate transcription.

Its subcellular location is the plastid. It localises to the chloroplast. The enzyme catalyses RNA(n) + a ribonucleoside 5'-triphosphate = RNA(n+1) + diphosphate. Functionally, DNA-dependent RNA polymerase catalyzes the transcription of DNA into RNA using the four ribonucleoside triphosphates as substrates. The chain is DNA-directed RNA polymerase subunit alpha from Pinus koraiensis (Korean pine).